The chain runs to 287 residues: PPP2R1A-PPP2R2A-interacting phosphatase regulator 1 (287 aa).

The tract at residues 1-44 is disordered; that stretch reads MAQEKMELDLELPPGTGGSPAEGGGSGGGGGLRRSNSAPLIHGL. The segment covering 15-32 has biased composition (gly residues); the sequence is GTGGSPAEGGGSGGGGGL. A Phosphoserine modification is found at Ser35. Ser37 bears the Phosphoserine; by CHEK1 mark. The residue at position 45 (Ser45) is a Phosphoserine. Thr47 carries the post-translational modification Phosphothreonine. Residues Ser48, Ser62, and Ser76 each carry the phosphoserine modification. Lys89 is covalently cross-linked (Glycyl lysine isopeptide (Lys-Gly) (interchain with G-Cter in SUMO1)). Ser143 and Ser147 each carry phosphoserine. Residue Thr149 is modified to Phosphothreonine. Disordered stretches follow at residues 167-189 and 236-287; these read SNGLPPSPIPSPTTRFTTRRSQS and GVCV…LSSK. 2 stretches are compositionally biased toward low complexity: residues 178–189 and 246–257; these read PTTRFTTRRSQS and GNSSSAGSSCNS. Residues Ser187 and Ser189 each carry the phosphoserine modification. A compositionally biased stretch (polar residues) spans 259-270; the sequence is AKVSTTTDSPVS. 3 positions are modified to phosphoserine: Ser267, Ser270, and Ser276.

This sequence belongs to the FAM122 family. As to quaternary structure, interacts with PPP2CA and PPP2R1A. Interacts (via its N-terminus) with PPP2R2A; the interaction is direct and this interaction inhibits PP2A activity. The CHEK1-mediated Ser-37 phosphorylated form interacts with 14-3-3 proteins. CHEK1-mediated phosphorylation at Ser-37 negatively regulates its ability to inhibit serine/threonine-protein phosphatase 2A (PP2A) activity. Phosphorylation leads to its release from the PP2A complex and its sequestration by 14-3-3 proteins in the cytoplasm resulting in its inability to translocate to the nucleus, where it otherwise inhibits PP2A.

The protein resides in the nucleus. It localises to the cytoplasm. Acts as an inhibitor of serine/threonine-protein phosphatase 2A (PP2A) activity. Inhibits PP2A activity by blocking the substrate binding site on PPP2R2A and the active site of PPP2CA. Potentiates ubiquitin-mediated proteasomal degradation of serine/threonine-protein phosphatase 2A catalytic subunit alpha (PPP2CA). Inhibits PP2A-mediated dephosphorylation of WEE1, promoting ubiquitin-mediated proteolysis of WEE1, thereby releasing G2/M checkpoint. This chain is PPP2R1A-PPP2R2A-interacting phosphatase regulator 1, found in Homo sapiens (Human).